A 122-amino-acid chain; its full sequence is Large ribosomal subunit protein uL14 (122 aa).

It belongs to the universal ribosomal protein uL14 family. As to quaternary structure, part of the 50S ribosomal subunit. Forms a cluster with proteins L3 and L19. In the 70S ribosome, L14 and L19 interact and together make contacts with the 16S rRNA in bridges B5 and B8.

In terms of biological role, binds to 23S rRNA. Forms part of two intersubunit bridges in the 70S ribosome. The protein is Large ribosomal subunit protein uL14 of Listeria monocytogenes serotype 4b (strain CLIP80459).